The following is a 163-amino-acid chain: NADH-quinone oxidoreductase subunit I (163 aa).

2 consecutive 4Fe-4S ferredoxin-type domains span residues 54–84 (LRRY…IDSH) and 94–123 (TRYD…LTRL). [4Fe-4S] cluster contacts are provided by Cys-64, Cys-67, Cys-70, Cys-74, Cys-103, Cys-106, Cys-109, and Cys-113.

It belongs to the complex I 23 kDa subunit family. In terms of assembly, NDH-1 is composed of 14 different subunits. Subunits NuoA, H, J, K, L, M, N constitute the membrane sector of the complex. Requires [4Fe-4S] cluster as cofactor.

It localises to the cell inner membrane. It catalyses the reaction a quinone + NADH + 5 H(+)(in) = a quinol + NAD(+) + 4 H(+)(out). NDH-1 shuttles electrons from NADH, via FMN and iron-sulfur (Fe-S) centers, to quinones in the respiratory chain. The immediate electron acceptor for the enzyme in this species is believed to be ubiquinone. Couples the redox reaction to proton translocation (for every two electrons transferred, four hydrogen ions are translocated across the cytoplasmic membrane), and thus conserves the redox energy in a proton gradient. This chain is NADH-quinone oxidoreductase subunit I, found in Halorhodospira halophila (strain DSM 244 / SL1) (Ectothiorhodospira halophila (strain DSM 244 / SL1)).